We begin with the raw amino-acid sequence, 212 residues long: Thymidylate kinase (212 aa).

10–17 (GPEGAGKT) provides a ligand contact to ATP.

This sequence belongs to the thymidylate kinase family.

It carries out the reaction dTMP + ATP = dTDP + ADP. Its function is as follows. Phosphorylation of dTMP to form dTDP in both de novo and salvage pathways of dTTP synthesis. The chain is Thymidylate kinase from Bacillus velezensis (strain DSM 23117 / BGSC 10A6 / LMG 26770 / FZB42) (Bacillus amyloliquefaciens subsp. plantarum).